The following is a 542-amino-acid chain: Importin subunit alpha (542 aa).

Met-1 is modified (N-acetylmethionine). Polar residues predominate over residues 1–11 (MDNGTDSSTSK). The IBB domain maps to 1 to 65 (MDNGTDSSTS…RNFIPPTDGA (65 aa)). A disordered region spans residues 1–77 (MDNGTDSSTS…DEEDESSVSA (77 aa)). Over residues 27–53 (FSADELRRRRDTQQVELRKAKRDEALA) the composition is skewed to basic and acidic residues. An ARM 1; truncated repeat occupies 89–122 (LPQMTQQLNSDDMQEQLSATVKFRQILSREHRPP). ARM repeat units follow at residues 123–162 (IDVV…ASGT), 163–204 (SAQT…AGDS), 205–251 (TDYR…PQPD), 252–288 (WSVV…SDGP), 289–330 (QEAI…VTGN), 331–372 (DLQT…TAGN), 373–417 (TEQI…GLQR), and 418–471 (PDII…LNIN). The interval 209-335 (DYVLQCNAME…IVTGNDLQTQ (127 aa)) is NLS binding site 1. Residues 419–505 (DIIRYLVSQG…KIYEKAYKII (87 aa)) are NLS binding site 2. The stretch at 472-508 (ENADFIEKAGGMEKIFNCQQNENDKIYEKAYKIIETY) is one ARM 10; atypical repeat.

This sequence belongs to the importin alpha family. In terms of assembly, forms a complex with an importin beta subunit. In the nucleus, interacts with NUP2 which accelerate release of NLSs, NUP2 is subsequently displaced by CSE1:RanGTP which mediates re-export and recycling. Interacts with HEH2, SHE2, and STS1.

It localises to the cytoplasm. Its subcellular location is the perinuclear region. Functionally, functions in nuclear protein import as an adapter protein for importin beta nuclear receptors. Binds specifically and directly to substrates containing either a simple or bipartite NLS motif. Promotes docking of import substrates to the nuclear envelope. Together with importin beta KAP95, mediates nuclear import of transcription factor GCN4. Together with tethering factor STS1, targets the proteasome to the nucleus. This chain is Importin subunit alpha (SRP1), found in Saccharomyces cerevisiae (strain ATCC 204508 / S288c) (Baker's yeast).